A 310-amino-acid chain; its full sequence is Endo-1,4-beta-xylanase B (310 aa).

The signal sequence occupies residues 1–19 (MISLSSVAIALTTVVGALA). The 191-residue stretch at 33-223 (AITSSQTGTN…SSGSASMTVS (191 aa)) folds into the GH11 domain. Glutamate 119 (nucleophile) is an active-site residue. Glutamate 210 acts as the Proton donor in catalysis. A compositionally biased stretch (low complexity) spans 218–227 (ASMTVSAGSS). The tract at residues 218–274 (ASMTVSAGSSSSGGSGSGSGSGSGSGSGSGSQTTTAGSSTGTGTGSGSGSGSGGSGG) is disordered. A compositionally biased stretch (gly residues) spans 228 to 246 (SSGGSGSGSGSGSGSGSGS). A compositionally biased stretch (low complexity) spans 247–256 (GSQTTTAGSS). Gly residues predominate over residues 257–274 (TGTGTGSGSGSGSGGSGG). Residues 275 to 310 (NCAAQWGQCGGQGWNGPTCCSSGTCKASNQWYSQCL) enclose the CBM1 domain.

It belongs to the glycosyl hydrolase 11 (cellulase G) family.

It is found in the secreted. The catalysed reaction is Endohydrolysis of (1-&gt;4)-beta-D-xylosidic linkages in xylans.. It participates in glycan degradation; xylan degradation. Functionally, endo-1,4-beta-xylanase involved in the hydrolysis of xylan, a major structural heterogeneous polysaccharide found in plant biomass representing the second most abundant polysaccharide in the biosphere, after cellulose. Hydrolyzes birchwood xylan, beechwood xylan, and oat spelt xylan to produce short-chain xylooligosaccharides, xylopentaose, xylotriose, and xylobiose as the main products. The polypeptide is Endo-1,4-beta-xylanase B (xynB) (Penicillium oxalicum).